We begin with the raw amino-acid sequence, 860 residues long: Paladin (860 aa).

The tract at residues 1 to 24 (MGTTASAAPQATLHERLHSDSMTD) is disordered. A lipid anchor (N-myristoyl glycine) is attached at Gly-2. A compositionally biased stretch (basic and acidic residues) spans 13–24 (LHERLHSDSMTD).

This sequence belongs to the paladin family.

The protein localises to the cytoplasm. It is found in the cytosol. The sequence is that of Paladin (pald1) from Danio rerio (Zebrafish).